The following is a 138-amino-acid chain: Invertebrate-type lysozyme 6 (138 aa).

Positions methionine 1–serine 18 are cleaved as a signal peptide. The I-type lysozyme domain occupies aspartate 19–serine 138. Intrachain disulfides connect cysteine 20-cysteine 106, cysteine 25-cysteine 31, cysteine 36-cysteine 45, cysteine 58-cysteine 86, cysteine 76-cysteine 82, and cysteine 98-cysteine 120. Glutamate 28 serves as the catalytic Proton donor. Residue aspartate 39 is the Nucleophile of the active site. Lysine 51–aspartate 57 provides a ligand contact to substrate. Substrate-binding positions include tyrosine 90 and histidine 113–glycine 115.

This sequence belongs to the glycosyl hydrolase 22 family. Type-I lysozyme subfamily. In terms of tissue distribution, expressed in pharyngeal gland cells and duct projections, coelomocytes and intestine.

The enzyme catalyses Hydrolysis of (1-&gt;4)-beta-linkages between N-acetylmuramic acid and N-acetyl-D-glucosamine residues in a peptidoglycan and between N-acetyl-D-glucosamine residues in chitodextrins.. Has bacteriolytic activity against Gram-positive bacteria. This Caenorhabditis elegans protein is Invertebrate-type lysozyme 6.